The chain runs to 448 residues: Asparagine--tRNA ligase (448 aa).

Belongs to the class-II aminoacyl-tRNA synthetase family. In terms of assembly, homodimer.

It localises to the cytoplasm. The enzyme catalyses tRNA(Asn) + L-asparagine + ATP = L-asparaginyl-tRNA(Asn) + AMP + diphosphate + H(+). The polypeptide is Asparagine--tRNA ligase (Streptococcus thermophilus (strain CNRZ 1066)).